The sequence spans 417 residues: Serine hydroxymethyltransferase (417 aa).

Residues Leu-121 and 125-127 each bind (6S)-5,6,7,8-tetrahydrofolate; that span reads GHL. Lys-230 carries the post-translational modification N6-(pyridoxal phosphate)lysine. Position 355-357 (355-357) interacts with (6S)-5,6,7,8-tetrahydrofolate; sequence SPF.

Belongs to the SHMT family. In terms of assembly, homodimer. It depends on pyridoxal 5'-phosphate as a cofactor.

It localises to the cytoplasm. It carries out the reaction (6R)-5,10-methylene-5,6,7,8-tetrahydrofolate + glycine + H2O = (6S)-5,6,7,8-tetrahydrofolate + L-serine. The protein operates within one-carbon metabolism; tetrahydrofolate interconversion. Its pathway is amino-acid biosynthesis; glycine biosynthesis; glycine from L-serine: step 1/1. Functionally, catalyzes the reversible interconversion of serine and glycine with tetrahydrofolate (THF) serving as the one-carbon carrier. This reaction serves as the major source of one-carbon groups required for the biosynthesis of purines, thymidylate, methionine, and other important biomolecules. Also exhibits THF-independent aldolase activity toward beta-hydroxyamino acids, producing glycine and aldehydes, via a retro-aldol mechanism. The protein is Serine hydroxymethyltransferase of Nitrosococcus oceani (strain ATCC 19707 / BCRC 17464 / JCM 30415 / NCIMB 11848 / C-107).